A 1028-amino-acid polypeptide reads, in one-letter code: MGRVPVPRSDSVRVAVRVRPFSQREKNSGSQCVISMHSGNISIRDPKNEERVKTFTFDLTYWSHDGFQKDEDGVLIPSDPASKFAGQSDVFHDIGRGILDSAWRGYNATLLAYGQTGSGKSYSMIGFGTNKGLIPRVCEELFQAIEKQKENLEPQVMFSMLEIYNEQIRDLLSRTKAPGGLRVREDQQLGFFVEGLKWVPCENYAQIEKLVEQGSKIRMTASTNMNASSSRSHMLIAIQFKQVFLDTALTKRSSINMVDLAGSERQRSSGSEGDRLREGSRVNLSLTSLGNVISALADLAMGKKVLHIPYRDSVLTKLLQSALGGNSRTTLIAALSPADICYEETLSTLRYAERAKKVRNRAVINTCPLARASRAENALLLGFRGAGAAEHPACFWAEQQLGNQGTWAQLLEQARREWEEQYEALTQEQKMVRILPHLLNVNEDPQLTGVLKFFIHNGSCDVGRAASNAICLQGLGISDKHASFVNLDGKVTVAPHSKCKVIVNGVPVTGRTKLQHLDRIILGSNSAFLYVGFPSERGAEDLSRFDYDFFQLERAAAEGVSVATLGCVSPGDDQADPSILAVFQDYVKLMPLVVEANQMSEELKKGLTMELKVKNLASSDSRGYDLQKEVMVKVTKQGTHEVWIWSKAKFINRKFLMEELYQRFLESRDSHVAQEDDPFWDPLEVVHLGSAHVWLQPLAHCMMLEEQVEFLNCDGLEEAVLHIRITPCSPEGWAHGEEDMVIDPLELLGKRIDFQTHIVRCLGVKWLKEDGSRGIQMGYGIYDLPNTLYTKPVWKSVNPRIEETVHFAALGASREFLDYLLTNALIVDLWGLQEGCAPLGVSQLDVLLTGEGHIMVDTKTFSSVKDVSQITSNQVPELYQKLLKLEQETELLRDVNRALRGENVFLKASLENAGSAPQAQKLDNPEGATRTAAREAKQVCAQQASSDAQLARALKVFYQGMGVARGQLLRLRRCRPPEDDQMLRPFVHQQSQMLKDLEDLLESSLHKLKADVAFIVKKRKEYLLPSQQ.

In terms of domain architecture, Kinesin motor spans 11-358; the sequence is SVRVAVRVRP…LRYAERAKKV (348 aa). Residue 114–121 participates in ATP binding; the sequence is GQTGSGKS. The FHA domain occupies 460–523; sequence CDVGRAASNA…LQHLDRIILG (64 aa). Residues 873 to 902 are a coiled coil; the sequence is NQVPELYQKLLKLEQETELLRDVNRALRGE.

Belongs to the TRAFAC class myosin-kinesin ATPase superfamily. Kinesin family.

It is found in the mitochondrion membrane. Its function is as follows. Microtubule-dependent motor protein required for mitochondrion morphology and transport of mitochondria in neuronal cells. This chain is Kinesin-like protein KIF28, found in Mus musculus (Mouse).